The sequence spans 203 residues: Large ribosomal subunit protein bL25 (203 aa).

Belongs to the bacterial ribosomal protein bL25 family. CTC subfamily. As to quaternary structure, part of the 50S ribosomal subunit; part of the 5S rRNA/L5/L18/L25 subcomplex. Contacts the 5S rRNA. Binds to the 5S rRNA independently of L5 and L18.

In terms of biological role, this is one of the proteins that binds to the 5S RNA in the ribosome where it forms part of the central protuberance. The polypeptide is Large ribosomal subunit protein bL25 (Rickettsia rickettsii (strain Iowa)).